Consider the following 123-residue polypeptide: Small ribosomal subunit protein uS12 (123 aa).

Asp89 is modified (3-methylthioaspartic acid). The segment at 103–123 is disordered; it reads DTSGVQDRRQGRSKYGAKRPK. A compositionally biased stretch (basic residues) spans 113–123; the sequence is GRSKYGAKRPK.

Belongs to the universal ribosomal protein uS12 family. Part of the 30S ribosomal subunit. Contacts proteins S8 and S17. May interact with IF1 in the 30S initiation complex.

In terms of biological role, with S4 and S5 plays an important role in translational accuracy. Functionally, interacts with and stabilizes bases of the 16S rRNA that are involved in tRNA selection in the A site and with the mRNA backbone. Located at the interface of the 30S and 50S subunits, it traverses the body of the 30S subunit contacting proteins on the other side and probably holding the rRNA structure together. The combined cluster of proteins S8, S12 and S17 appears to hold together the shoulder and platform of the 30S subunit. The polypeptide is Small ribosomal subunit protein uS12 (Nitratidesulfovibrio vulgaris (strain ATCC 29579 / DSM 644 / CCUG 34227 / NCIMB 8303 / VKM B-1760 / Hildenborough) (Desulfovibrio vulgaris)).